The sequence spans 928 residues: Inner tegument protein (928 aa).

The segment at 482-928 (WGGAVPANLA…LAGLRKLFVE (447 aa)) is interaction with large tegument protein.

Belongs to the herpesviridae inner tegument protein family. In terms of assembly, interacts (via C-terminus) with the large tegument protein/LTP (via N-terminus).

Its subcellular location is the virion tegument. The protein localises to the host cytoplasm. The protein resides in the host nucleus. It localises to the host Golgi apparatus. It is found in the host trans-Golgi network. In terms of biological role, plays an essential role in cytoplasmic secondary envelopment during viral egress. Interacts with the capsid via the large tegument protein/LTP and participates in its transport to the host trans-Golgi network (TGN) where secondary envelopment occurs. Modulates tegumentation and capsid accumulation at the viral assembly complex. The sequence is that of Inner tegument protein (ORF63) from Homo sapiens (Human).